The chain runs to 333 residues: Heat shock transcription factor, X-linked member 3 (333 aa).

The interval Met1–Asn66 is disordered. Low complexity predominate over residues Gly29–Ser39. The span at Ala49–Ser60 shows a compositional bias: polar residues. A DNA-binding region spans residues Phe79–Lys182. The disordered stretch occupies residues Gln227–Gly275. The span at Gly228–Arg242 shows a compositional bias: polar residues.

The protein belongs to the HSF family.

It is found in the nucleus. This Homo sapiens (Human) protein is Heat shock transcription factor, X-linked member 3.